The primary structure comprises 1405 residues: DNA-directed RNA polymerase subunit beta' (1405 aa).

Residues cysteine 70, cysteine 72, cysteine 85, and cysteine 88 each contribute to the Zn(2+) site. Mg(2+)-binding residues include aspartate 460, aspartate 462, and aspartate 464. Cysteine 815, cysteine 890, cysteine 897, and cysteine 900 together coordinate Zn(2+).

It belongs to the RNA polymerase beta' chain family. As to quaternary structure, the RNAP catalytic core consists of 2 alpha, 1 beta, 1 beta' and 1 omega subunit. When a sigma factor is associated with the core the holoenzyme is formed, which can initiate transcription. Mg(2+) is required as a cofactor. Requires Zn(2+) as cofactor.

The catalysed reaction is RNA(n) + a ribonucleoside 5'-triphosphate = RNA(n+1) + diphosphate. DNA-dependent RNA polymerase catalyzes the transcription of DNA into RNA using the four ribonucleoside triphosphates as substrates. In Xanthomonas campestris pv. campestris (strain B100), this protein is DNA-directed RNA polymerase subunit beta'.